The sequence spans 486 residues: Protein nucleotidyltransferase YdiU (486 aa).

Residues G90, G92, R93, K113, D125, G126, R176, and R183 each contribute to the ATP site. Residue D252 is the Proton acceptor of the active site. Residues N253 and D262 each coordinate Mg(2+). Residue D262 coordinates ATP.

It belongs to the SELO family. The cofactor is Mg(2+). Mn(2+) serves as cofactor.

The enzyme catalyses L-seryl-[protein] + ATP = 3-O-(5'-adenylyl)-L-seryl-[protein] + diphosphate. It carries out the reaction L-threonyl-[protein] + ATP = 3-O-(5'-adenylyl)-L-threonyl-[protein] + diphosphate. The catalysed reaction is L-tyrosyl-[protein] + ATP = O-(5'-adenylyl)-L-tyrosyl-[protein] + diphosphate. It catalyses the reaction L-histidyl-[protein] + UTP = N(tele)-(5'-uridylyl)-L-histidyl-[protein] + diphosphate. The enzyme catalyses L-seryl-[protein] + UTP = O-(5'-uridylyl)-L-seryl-[protein] + diphosphate. It carries out the reaction L-tyrosyl-[protein] + UTP = O-(5'-uridylyl)-L-tyrosyl-[protein] + diphosphate. Functionally, nucleotidyltransferase involved in the post-translational modification of proteins. It can catalyze the addition of adenosine monophosphate (AMP) or uridine monophosphate (UMP) to a protein, resulting in modifications known as AMPylation and UMPylation. This Stutzerimonas stutzeri (strain A1501) (Pseudomonas stutzeri) protein is Protein nucleotidyltransferase YdiU.